Reading from the N-terminus, the 452-residue chain is D-inositol 3-phosphate glycosyltransferase (452 aa).

His25 lines the 1D-myo-inositol 3-phosphate pocket. UDP-N-acetyl-alpha-D-glucosamine contacts are provided by residues 31–32 and Gly39; that span reads QP. 1D-myo-inositol 3-phosphate is bound by residues 36–41, Lys94, Tyr127, Thr151, and Arg171; that span reads DAGGMN. Arg245, Lys250, and Gln309 together coordinate UDP-N-acetyl-alpha-D-glucosamine. Mg(2+) is bound by residues Tyr318, Arg319, and Ser321. Glu331 and Glu339 together coordinate UDP-N-acetyl-alpha-D-glucosamine. Thr345 contributes to the Mg(2+) binding site.

It belongs to the glycosyltransferase group 1 family. MshA subfamily. In terms of assembly, homodimer.

It carries out the reaction 1D-myo-inositol 3-phosphate + UDP-N-acetyl-alpha-D-glucosamine = 1D-myo-inositol 2-acetamido-2-deoxy-alpha-D-glucopyranoside 3-phosphate + UDP + H(+). In terms of biological role, catalyzes the transfer of a N-acetyl-glucosamine moiety to 1D-myo-inositol 3-phosphate to produce 1D-myo-inositol 2-acetamido-2-deoxy-glucopyranoside 3-phosphate in the mycothiol biosynthesis pathway. The sequence is that of D-inositol 3-phosphate glycosyltransferase from Rhodococcus jostii (strain RHA1).